A 274-amino-acid polypeptide reads, in one-letter code: Diaminopimelate epimerase (274 aa).

Substrate contacts are provided by Asn11 and Asn62. The active-site Proton donor is the Cys71. Substrate-binding positions include 72 to 73, Asn157, Asn190, and 208 to 209; these read GN and ER. The active-site Proton acceptor is Cys217. 218–219 contacts substrate; that stretch reads GT.

Belongs to the diaminopimelate epimerase family. In terms of assembly, homodimer.

Its subcellular location is the cytoplasm. It catalyses the reaction (2S,6S)-2,6-diaminopimelate = meso-2,6-diaminopimelate. The protein operates within amino-acid biosynthesis; L-lysine biosynthesis via DAP pathway; DL-2,6-diaminopimelate from LL-2,6-diaminopimelate: step 1/1. Catalyzes the stereoinversion of LL-2,6-diaminopimelate (L,L-DAP) to meso-diaminopimelate (meso-DAP), a precursor of L-lysine and an essential component of the bacterial peptidoglycan. The sequence is that of Diaminopimelate epimerase from Elusimicrobium minutum (strain Pei191).